A 176-amino-acid chain; its full sequence is MFHVSFRYIFGIPPLILVLLPVASSDCDIEGKDGGVYQNVLMVSIDDLDRMIDFDSNCLNNEPNFLKKHSCDDNKEASFLYRAARKLKQFIKMNISEEFNHHLSTVSQGTLTLFNCTSKVKGRKPPSLGEAQLTKNLEENKSLKEQKRQGDLCFLKILLQKIKTCWNKILRGAKEY.

An N-terminal signal peptide occupies residues 1–25 (MFHVSFRYIFGIPPLILVLLPVASS). Cystine bridges form between C27-C165, C58-C153, and C71-C116. N-linked (GlcNAc...) asparagine glycosylation is found at N94, N115, and N140.

Belongs to the IL-7/IL-9 family.

It is found in the secreted. In terms of biological role, hematopoietic growth factor capable of stimulating the proliferation of lymphoid progenitors. It is important for proliferation during certain stages of B-cell maturation. The sequence is that of Interleukin-7 (IL7) from Sus scrofa (Pig).